The following is a 201-amino-acid chain: Pectinesterase inhibitor 7 (201 aa).

The signal sequence occupies residues 1 to 24 (MARNFELSLILFVLYLSTAAIVMA). Intrachain disulfides connect Cys-42–Cys-51 and Cys-108–Cys-159.

This sequence belongs to the PMEI family. In terms of assembly, binds reversibly to PME3 to inhibit its activity; the stability of the PME3-PMEI7 complex and the inhibition of the pectin methylesterase (PME) activity is pH-dependent, based on protonation status of amino-acids at the complex interface. In terms of tissue distribution, accumulates in etiolated hypocotyls (at protein level).

It is found in the secreted. It localises to the extracellular space. The protein resides in the apoplast. Its subcellular location is the cell wall. Functionally, pectin methylesterase (PME) inhibitor that can target PME3 in a pH-dependent manner, mainly in slightly acidic conditions (pH 6.0 and 5.0) but not at pH 7.0; this processus relies on changes in the protonation of amino acids involved in intermolecular and intramolecular interactions. Regulates homogalacturonan methylesterification during plant development. The sequence is that of Pectinesterase inhibitor 7 from Arabidopsis thaliana (Mouse-ear cress).